Here is a 208-residue protein sequence, read N- to C-terminus: Fucoxanthin-chlorophyll a-c binding protein, chloroplastic (208 aa).

The transit peptide at 1–31 directs the protein to the chloroplast; the sequence is MMTLASLPSTAIAGLASAAPKVQPRMAANDE. A helical membrane pass occupies residues 102–118; sequence IPQLPYWLWIVMTIGIG.

The protein belongs to the fucoxanthin chlorophyll protein family. The LHC complex of chromophytic algae is composed of fucoxanthin, chlorophyll A and C bound non-covalently by fucoxanthin chlorophyll proteins (FCPs). The ratio of pigments in this LHC is; fucoxanthin: chlorophyll C: chlorophyll A; (0.6-1): (0.1-0.3): (1).

It is found in the plastid. Its subcellular location is the chloroplast thylakoid membrane. The light-harvesting complex (LHC) functions as a light receptor, it captures and delivers excitation energy to photosystems with which it is closely associated. Energy is transferred from the carotenoid and chlorophyll C (or B) to chlorophyll A and the photosynthetic reaction centers where it is used to synthesize ATP and reducing power. The sequence is that of Fucoxanthin-chlorophyll a-c binding protein, chloroplastic (FCP) from Isochrysis galbana (Marine planktonic alga).